The sequence spans 648 residues: Copper methylamine oxidase (648 aa).

Residues 1 to 9 constitute a propeptide that is removed on maturation; it reads MTLNAESEA. Substrate is bound at residue 299–310; sequence AFDSGEYNIGNM. The active-site Proton acceptor is the Asp301. The cysteines at positions 320 and 346 are disulfide-linked. 382–387 contributes to the substrate binding site; it reads VANYEY. Residue Tyr385 is the Schiff-base intermediate with substrate; via topaquinone of the active site. 2',4',5'-topaquinone is present on Tyr385. Cu cation contacts are provided by His436 and His438. 3 residues coordinate Mn(2+): Asp445, Phe446, and Asp584. His595 provides a ligand contact to Cu cation. The disordered stretch occupies residues 629-648; sequence PTSTSTTQTGEADTCCHTDK.

It belongs to the copper/topaquinone oxidase family. In terms of assembly, homodimer. It depends on Cu cation as a cofactor. Requires Zn(2+) as cofactor. L-topaquinone is required as a cofactor. The cofactor is Mn(2+). Post-translationally, topaquinone (TPQ) is generated by copper-dependent autoxidation of a specific tyrosyl residue.

It carries out the reaction a primary methyl amine + O2 + H2O = an aldehyde + H2O2 + NH4(+). In Arthrobacter sp. (strain P1), this protein is Copper methylamine oxidase (maoII).